Here is a 198-residue protein sequence, read N- to C-terminus: N-acetyltransferase 9-like protein (198 aa).

Positions 34–178 (EEIRRLTGSE…KEITMELPGE (145 aa)) constitute an N-acetyltransferase domain.

This sequence belongs to the acetyltransferase family. GNAT subfamily.

The sequence is that of N-acetyltransferase 9-like protein from Caenorhabditis briggsae.